Reading from the N-terminus, the 647-residue chain is 1-deoxy-D-xylulose-5-phosphate synthase (647 aa).

Thiamine diphosphate-binding positions include His-79 and 120–122 (GHA). Mg(2+) is bound at residue Asp-152. Residues 153-154 (GS), Asn-181, Phe-293, and Glu-377 each bind thiamine diphosphate. Residue Asn-181 coordinates Mg(2+).

This sequence belongs to the transketolase family. DXPS subfamily. In terms of assembly, homodimer. Requires Mg(2+) as cofactor. Thiamine diphosphate is required as a cofactor.

The enzyme catalyses D-glyceraldehyde 3-phosphate + pyruvate + H(+) = 1-deoxy-D-xylulose 5-phosphate + CO2. It functions in the pathway metabolic intermediate biosynthesis; 1-deoxy-D-xylulose 5-phosphate biosynthesis; 1-deoxy-D-xylulose 5-phosphate from D-glyceraldehyde 3-phosphate and pyruvate: step 1/1. Catalyzes the acyloin condensation reaction between C atoms 2 and 3 of pyruvate and glyceraldehyde 3-phosphate to yield 1-deoxy-D-xylulose-5-phosphate (DXP). The sequence is that of 1-deoxy-D-xylulose-5-phosphate synthase from Bacteroides thetaiotaomicron (strain ATCC 29148 / DSM 2079 / JCM 5827 / CCUG 10774 / NCTC 10582 / VPI-5482 / E50).